A 154-amino-acid polypeptide reads, in one-letter code: Protein-export protein SecB (154 aa).

This sequence belongs to the SecB family. Homotetramer, a dimer of dimers. One homotetramer interacts with 1 SecA dimer.

The protein localises to the cytoplasm. Its function is as follows. One of the proteins required for the normal export of preproteins out of the cell cytoplasm. It is a molecular chaperone that binds to a subset of precursor proteins, maintaining them in a translocation-competent state. It also specifically binds to its receptor SecA. This Buchnera aphidicola subsp. Schizaphis graminum (strain Sg) protein is Protein-export protein SecB.